The chain runs to 847 residues: MSKSFQQSSLSRDSQGHGRDLSAAGIGLLAAATQSLSMPASLGRMNQGTARLASLMNLGMSSSLNQQGAHSALSSASTSSHNLQSIFNIGSRGPLPLSSQHRGDADQASNILASFGLSARDLDELSRYPEDKITPENLPQILLQLKRRRTEEGPTLSYGRDGRSATREPPYRVPRDDWEEKRHFRRDSFDDRGPSLNPVLDYDHGSRSQESGYYDRMDYEDDRLRDGERCRDDSFFGETSHNYHKFDSEYERMGRGPGPLQERSLFEKKRGAPPSSNIEDFHGLLPKGYPHLCSICDLPVHSNKEWSQHINGASHSRRCQLLLEIYPEWNPDNDTGHTMGDPFMLQQSTNPAPGILGPPPPSFHLGGPAVGPRGNLGAGNGNLQGPRHMQKGRVETSRVVHIMDFQRGKNLRYQLLQLVEPFGVISNHLILNKINEAFIEMATTEDAQAAVDYYTTTPALVFGKPVRVHLSQKYKRIKKPEGKPDQKFDQKQELGRVIHLSNLPHSGYSDSAVLKLAEPYGKIKNYILMRMKSQAFIEMETREDAMAMVDHCLKKALWFQGRCVKVDLSEKYKKLVLRIPNRGIDLLKKDKSRKRSYSPDGKESPSDKKSKTDGSQKTESSTEGKEQEEKSGEDGEKDTKDDQTEQEPNMLLESEDELLVDEEEAAALLESGSSVGDETDLANLGDVASDGKKEPSDKAVKKDGSASAAAKKKLKKVDKIEELDQENEAALENGIKNEENTEPGAESSENADDPNKDTSENADGQSDENKDDYTIPDEYRIGPYQPNVPVGIDYVIPKTGFYCKLCSLFYTNEEVAKNTHCSSLPHYQKLKKFLNKLAEERRQKKET.

At Ser2 the chain carries N-acetylserine. N6-acetyllysine; alternate is present on Lys3. Lys3 is covalently cross-linked (Glycyl lysine isopeptide (Lys-Gly) (interchain with G-Cter in SUMO2); alternate). Phosphoserine occurs at positions 4, 9, 11, 14, 22, 41, 118, and 126. Glycyl lysine isopeptide (Lys-Gly) (interchain with G-Cter in SUMO2) cross-links involve residues Lys132 and Lys146. 2 disordered regions span residues 146–174 (KRRRTEEGPTLSYGRDGRSATREPPYRVP) and 187–214 (DSFDDRGPSLNPVLDYDHGSRSQESGYY). Thr150 carries the phosphothreonine modification. Ser157 carries the phosphoserine modification. Phosphotyrosine is present on Tyr158. The segment covering 160–174 (RDGRSATREPPYRVP) has biased composition (basic and acidic residues). Phosphoserine is present on residues Ser164, Ser188, and Ser195. The segment covering 201-214 (DYDHGSRSQESGYY) has biased composition (basic and acidic residues). Tyr202 is modified (phosphotyrosine). Ser206, Ser208, and Ser211 each carry phosphoserine. Residue Tyr219 is modified to Phosphotyrosine. The residue at position 234 (Ser234) is a Phosphoserine. Lys245 is covalently cross-linked (Glycyl lysine isopeptide (Lys-Gly) (interchain with G-Cter in SUMO2)). Position 264 is a phosphoserine (Ser264). Residue Lys269 forms a Glycyl lysine isopeptide (Lys-Gly) (interchain with G-Cter in SUMO2) linkage. A Phosphoserine modification is found at Ser275. A disordered region spans residues 342-394 (PFMLQQSTNPAPGILGPPPPSFHLGGPAVGPRGNLGAGNGNLQGPRHMQKGRV). The RRM 1 domain occupies 398–473 (RVVHIMDFQR…KPVRVHLSQK (76 aa)). Residues Lys478, Lys487, and Lys491 each participate in a glycyl lysine isopeptide (Lys-Gly) (interchain with G-Cter in SUMO2) cross-link. The RRM 2 domain occupies 496–571 (RVIHLSNLPH…RCVKVDLSEK (76 aa)). 2 positions are modified to phosphoserine: Ser509 and Ser511. Lys515 is covalently cross-linked (Glycyl lysine isopeptide (Lys-Gly) (interchain with G-Cter in SUMO2)). Lys522 is modified (N6-acetyllysine; alternate). Lys522 participates in a covalent cross-link: Glycyl lysine isopeptide (Lys-Gly) (interchain with G-Cter in SUMO2); alternate. Position 533 is a phosphoserine (Ser533). Glycyl lysine isopeptide (Lys-Gly) (interchain with G-Cter in SUMO2) cross-links involve residues Lys554 and Lys555. An N6-acetyllysine modification is found at Lys571. Residues 588–786 (KKDKSRKRSY…DEYRIGPYQP (199 aa)) form a disordered region. Phosphoserine is present on residues Ser596, Ser598, Ser604, and Ser606. Residues 600–643 (DGKESPSDKKSKTDGSQKTESSTEGKEQEEKSGEDGEKDTKDDQ) are compositionally biased toward basic and acidic residues. Glycyl lysine isopeptide (Lys-Gly) (interchain with G-Cter in SUMO2) cross-links involve residues Lys617 and Lys630. The span at 653 to 665 (ESEDELLVDEEEA) shows a compositional bias: acidic residues. A phosphoserine mark is found at Ser654, Ser671, Ser673, and Ser674. Residues 666–676 (AALLESGSSVG) show a composition bias toward low complexity. Position 679 is a phosphothreonine (Thr679). At Ser689 the chain carries Phosphoserine. Over residues 689–704 (SDGKKEPSDKAVKKDG) the composition is skewed to basic and acidic residues. The Nuclear localization signal signature appears at 710–718 (AKKKLKKVD). Glycyl lysine isopeptide (Lys-Gly) (interchain with G-Cter in SUMO2) cross-links involve residues Lys719 and Lys736. Position 741 is a phosphothreonine (Thr741). Phosphoserine is present on residues Ser747, Ser759, and Ser766. The segment covering 767 to 780 (DENKDDYTIPDEYR) has biased composition (basic and acidic residues). A Glycyl lysine isopeptide (Lys-Gly) (interchain with G-Cter in SUMO2) cross-link involves residue Lys770. A Matrin-type zinc finger spans residues 801–832 (FYCKLCSLFYTNEEVAKNTHCSSLPHYQKLKK). An N6-acetyllysine; alternate modification is found at Lys836. Residue Lys836 forms a Glycyl lysine isopeptide (Lys-Gly) (interchain with G-Cter in SUMO2); alternate linkage.

In terms of assembly, part of a complex consisting of SFPQ, NONO and MATR3. Interacts with AGO1 and AGO2. Part of a complex composed at least of ASH2L, EMSY, HCFC1, HSPA8, CCAR2, MATR3, MKI67, RBBP5, TUBB2A, WDR5 and ZNF335; this complex may have a histone H3-specific methyltransferase activity. Interacts with TARDBP. Part of the HDP-RNP complex composed of at least HEXIM1, PRKDC, XRCC5, XRCC6, paraspeckle proteins (SFPQ, NONO, PSPC1, RBM14, and MATR3) and NEAT1 RNA. Interacts with FUS. Interacts with IGF2BP1; the interaction is enhanced by SEPIN14P20 peptide RBPR. Interacts with IGF2BP2 and IGF2BP3. Interacts with RBPMS.

It is found in the nucleus matrix. In terms of biological role, may play a role in transcription or may interact with other nuclear matrix proteins to form the internal fibrogranular network. In association with the SFPQ-NONO heteromer may play a role in nuclear retention of defective RNAs. Plays a role in the regulation of DNA virus-mediated innate immune response by assembling into the HDP-RNP complex, a complex that serves as a platform for IRF3 phosphorylation and subsequent innate immune response activation through the cGAS-STING pathway. Binds to N6-methyladenosine (m6A)-containing mRNAs and contributes to MYC stability by binding to m6A-containing MYC mRNAs. May bind to specific miRNA hairpins. The polypeptide is Matrin-3 (MATR3) (Homo sapiens (Human)).